A 296-amino-acid chain; its full sequence is Bifunctional protein FolD (296 aa).

Residues 169-171 (GRG), Thr196, and Val237 each bind NADP(+).

Belongs to the tetrahydrofolate dehydrogenase/cyclohydrolase family. In terms of assembly, homodimer.

It catalyses the reaction (6R)-5,10-methylene-5,6,7,8-tetrahydrofolate + NADP(+) = (6R)-5,10-methenyltetrahydrofolate + NADPH. The catalysed reaction is (6R)-5,10-methenyltetrahydrofolate + H2O = (6R)-10-formyltetrahydrofolate + H(+). It functions in the pathway one-carbon metabolism; tetrahydrofolate interconversion. Catalyzes the oxidation of 5,10-methylenetetrahydrofolate to 5,10-methenyltetrahydrofolate and then the hydrolysis of 5,10-methenyltetrahydrofolate to 10-formyltetrahydrofolate. This Kocuria rhizophila (strain ATCC 9341 / DSM 348 / NBRC 103217 / DC2201) protein is Bifunctional protein FolD.